Here is a 289-residue protein sequence, read N- to C-terminus: 4-diphosphocytidyl-2-C-methyl-D-erythritol kinase (289 aa).

The active site involves Lys-10. Residue 94-104 coordinates ATP; sequence PVAAGLAGGSS. Asp-136 is an active-site residue.

It belongs to the GHMP kinase family. IspE subfamily.

It carries out the reaction 4-CDP-2-C-methyl-D-erythritol + ATP = 4-CDP-2-C-methyl-D-erythritol 2-phosphate + ADP + H(+). The protein operates within isoprenoid biosynthesis; isopentenyl diphosphate biosynthesis via DXP pathway; isopentenyl diphosphate from 1-deoxy-D-xylulose 5-phosphate: step 3/6. Functionally, catalyzes the phosphorylation of the position 2 hydroxy group of 4-diphosphocytidyl-2C-methyl-D-erythritol. This chain is 4-diphosphocytidyl-2-C-methyl-D-erythritol kinase, found in Bacillus cytotoxicus (strain DSM 22905 / CIP 110041 / 391-98 / NVH 391-98).